The chain runs to 101 residues: Putative UPF0377 protein YBL108W (101 aa).

This sequence belongs to the UPF0377 family.

The protein is Putative UPF0377 protein YBL108W of Saccharomyces cerevisiae (strain ATCC 204508 / S288c) (Baker's yeast).